Consider the following 117-residue polypeptide: Large ribosomal subunit protein bL20 (117 aa).

Belongs to the bacterial ribosomal protein bL20 family.

In terms of biological role, binds directly to 23S ribosomal RNA and is necessary for the in vitro assembly process of the 50S ribosomal subunit. It is not involved in the protein synthesizing functions of that subunit. The protein is Large ribosomal subunit protein bL20 of Idiomarina loihiensis (strain ATCC BAA-735 / DSM 15497 / L2-TR).